Here is a 383-residue protein sequence, read N- to C-terminus: S-adenosylmethionine synthase (383 aa).

An ATP-binding site is contributed by His-15. Mg(2+) is bound at residue Asp-17. Glu-43 lines the K(+) pocket. L-methionine-binding residues include Glu-56 and Gln-99. The tract at residues 99 to 109 is flexible loop; the sequence is QSPDINQGVDR. ATP is bound by residues 164 to 166, 230 to 231, Asp-239, 245 to 246, Ala-262, and Lys-266; these read DAK, RF, and RK. Asp-239 provides a ligand contact to L-methionine. Residue Lys-270 coordinates L-methionine.

It belongs to the AdoMet synthase family. As to quaternary structure, homotetramer; dimer of dimers. Requires Mg(2+) as cofactor. The cofactor is K(+).

It is found in the cytoplasm. The catalysed reaction is L-methionine + ATP + H2O = S-adenosyl-L-methionine + phosphate + diphosphate. It functions in the pathway amino-acid biosynthesis; S-adenosyl-L-methionine biosynthesis; S-adenosyl-L-methionine from L-methionine: step 1/1. Catalyzes the formation of S-adenosylmethionine (AdoMet) from methionine and ATP. The overall synthetic reaction is composed of two sequential steps, AdoMet formation and the subsequent tripolyphosphate hydrolysis which occurs prior to release of AdoMet from the enzyme. The sequence is that of S-adenosylmethionine synthase from Shewanella sp. (strain ANA-3).